Reading from the N-terminus, the 616-residue chain is uncharacterized protein (616 aa).

This sequence belongs to the UbiD family.

This is an uncharacterized protein from Helicobacter pylori (strain J99 / ATCC 700824) (Campylobacter pylori J99).